The primary structure comprises 269 residues: Histone doublet H2B-H2A (269 aa).

The tract at residues 1 to 168 is histone fold; it reads MATQKETTRK…LAGNAARDSK (168 aa). Residues 210 to 249 are disordered; that stretch reads RKKARKTTEKEASSPKKKAAPKKKKAASKQKKSLSDKELA. The segment covering 224–241 has biased composition (basic residues); the sequence is PKKKAAPKKKKAASKQKK.

The protein localises to the host nucleus. It localises to the host cytoplasm. It is found in the virion. Histone-like protein that is recruited to viral factories during viral replication and participates in viral DNA packaging and virion production probably by forming unstable nucleosome-like particles. May compact the viral DNA. This chain is Histone doublet H2B-H2A, found in Melbournevirus (MelV).